The following is a 378-amino-acid chain: Circumsporozoite protein (378 aa).

The first 22 residues, 1-22 (MKNFILLAVSSILLVDLFPTHC), serve as a signal peptide directing secretion. Positions 51–295 (HVGQSASRGR…NNEGANAPNE (245 aa)) are disordered. Residues 72 to 100 (DAKKKKDGKKAEPKNPRENKLKQPGDRAD) show a composition bias toward basic and acidic residues. Residues 80–88 (KKAEPKNPR) are required for the binding to heparan sulfate proteoglycans (HSPGs) on the surface of host hepatocytes. Residues 91–95 (KLKQP) are region I; contains the proteolytic cleavage site. 19 repeat units span residues 95–103 (PGDRADGQP), 104–112 (AGDRADGQP), 113–121 (AGDRADGQP), 122–130 (AGDRAAGQP), 131–139 (AGDRADGQP), 140–148 (AGDRADGQP), 149–157 (AGDRADGQP), 158–166 (AGDRADGQP), 167–175 (AGDRAAGQP), 176–184 (AGDRAAGQP), 185–193 (AGDRADGQP), 194–202 (AGDRAAGQP), 203–211 (AGDRADGQP), 212–220 (AGDRAAGQP), 221–229 (AGDRADGQP), 230–238 (AGDRAAGQP), 239–247 (AGDRAAGQP), 248–256 (AGDRAAGQP), and 257–265 (AGDRAAGQP). The tract at residues 95-265 (PGDRADGQPA…PAGDRAAGQP (171 aa)) is 19 X 9 AA tandem repeats of [PA]-G-D-R-A-[DA]-G-Q-P. Residues 266-284 (AGNGAGGQAAGGNAGGGQG) show a composition bias toward gly residues. Positions 285–295 (QNNEGANAPNE) are enriched in low complexity. The 53-residue stretch at 304 to 356 (KVRATVGTEWTPCSVTCGVGVRVRRRVNAANKKPEDLTLNDLETDVCTMDKCA) folds into the TSP type-1 domain. Intrachain disulfides connect Cys316–Cys350 and Cys320–Cys355. The O-linked (Fuc) threonine glycan is linked to Thr319. Cys355 is lipidated: GPI-anchor amidated cysteine. The propeptide at 356 to 378 (AGIFNVVSNSLGLVILLVLALFN) is removed in mature form.

It belongs to the plasmodium circumsporozoite protein family. Post-translationally, during host cell invasion, proteolytically cleaved at the cell membrane in the region I by a papain-like cysteine protease of parasite origin. Cleavage is triggered by the sporozoite contact with highly sulfated heparan sulfate proteoglycans (HSPGs) present on the host hepatocyte cell surface. Cleavage exposes the TSP type-1 (TSR) domain and is required for productive invasion of host hepatocytes but not for adhesion to the host cell membrane. Cleavage is dispensable for sporozoite development in the oocyst, motility and for traversal of host and vector cells. O-glycosylated; maybe by POFUT2.

The protein localises to the cell membrane. It localises to the cytoplasm. Its function is as follows. Essential sporozoite protein. In the mosquito vector, required for sporozoite development in the oocyst, migration through the vector hemolymph and entry into the vector salivary glands. In the vertebrate host, required for sporozoite migration through the host dermis and infection of host hepatocytes. Binds to highly sulfated heparan sulfate proteoglycans (HSPGs) on the surface of host hepatocytes. In terms of biological role, in the vertebrate host, binds to highly sulfated heparan sulfate proteoglycans (HSPGs) on the surface of host hepatocytes and is required for sporozoite invasion of the host hepatocytes. In Plasmodium vivax (strain Belem), this protein is Circumsporozoite protein.